The chain runs to 806 residues: Lysine-specific demethylase JMJ15 (806 aa).

Residues 1 to 43 (MEPFSAAQNKEDKDTSVEPPRRRCHRKNKGTNVEPPSSPYHPK) are disordered. The span at 9–21 (NKEDKDTSVEPPR) shows a compositional bias: basic and acidic residues. The JmjN domain maps to 61–102 (APVFHPTSEEFEDTLAYIEKIRPLAESFGICRIVPPSNWSPP). A disordered region spans residues 128 to 176 (NRGPVKKKTPKGRKRKRGKYSRTVAPKKRNGSVSKSVSTPKATEEENFG). Over residues 131-157 (PVKKKTPKGRKRKRGKYSRTVAPKKRN) the composition is skewed to basic residues. Residues 132-139 (VKKKTPKG) carry the Nuclear localization signal motif. A compositionally biased stretch (polar residues) spans 158-168 (GSVSKSVSTPK). Positions 261–427 (KYISSGWNLN…HGQNAVEIYS (167 aa)) constitute a JmjC domain. H307, E309, and H395 together coordinate Fe cation. Zn(2+) is bound by residues C514, C517, C528, C531, C539, H542, C545, and C547. A C5HC2 zinc finger spans residues 514–566 (CISCFSDLHLSATGCKNCSSLEEYGCTKHDICSCEGKDRFIFLRYTIDELSSL). One can recognise an FYR N-terminal domain in the interval 629 to 687 (IMDLAAYHVEPINLGFLVVGKLWCNKHAIFPKGFKSRVKFYNVQDPMRISYYVSEIVDA). An FYR C-terminal domain is found at 689 to 775 (LLGPLFKVTL…HGQVEYWNHK (87 aa)).

The protein belongs to the JARID1 histone demethylase family. It depends on Fe(2+) as a cofactor. Expressed in roots, cotyledons, shoot apex, rosette and cauline leaves, stems, inflorescences and siliques. Expressed at low levels during vegetative growth but to higher levels in young floral organs.

It localises to the nucleus. The catalysed reaction is N(6),N(6),N(6)-trimethyl-L-lysyl(4)-[histone H3] + 2-oxoglutarate + O2 = N(6),N(6)-dimethyl-L-lysyl(4)-[histone H3] + formaldehyde + succinate + CO2. Its function is as follows. Histone demethylase that demethylates 'Lys-4' (H3K4me) of histone H3 with a specific activity for H3K4me3. No activity on H3K4me2, H3K4me1, H3K9me3/2, H3K27me3/2 and H3K36me3/2. Involved in the control of flowering time by demethylating H3K4me3 at the FLC locus and repressing its expression. The repression of FLC level and reduction in H3K4me3 at the FLC locus results in induction of the flowering activator FT, which is a downstream target of FLC. Promotes salt tolerance by down-regulating the expression of several transcriptions factors involved in stress responses via H3K4me3 and H3K4me2 demethylation. The polypeptide is Lysine-specific demethylase JMJ15 (Arabidopsis thaliana (Mouse-ear cress)).